The primary structure comprises 473 residues: tRNA-2-methylthio-N(6)-dimethylallyladenosine synthase (473 aa).

The 121-residue stretch at arginine 5–arginine 125 folds into the MTTase N-terminal domain. The [4Fe-4S] cluster site is built by cysteine 14, cysteine 50, cysteine 88, cysteine 166, cysteine 170, and cysteine 173. The Radical SAM core domain maps to arginine 152–alanine 384. The TRAM domain occupies alanine 387–alanine 449. Positions glutamine 452 to alanine 473 are disordered.

The protein belongs to the methylthiotransferase family. MiaB subfamily. Monomer. Requires [4Fe-4S] cluster as cofactor.

Its subcellular location is the cytoplasm. It catalyses the reaction N(6)-dimethylallyladenosine(37) in tRNA + (sulfur carrier)-SH + AH2 + 2 S-adenosyl-L-methionine = 2-methylsulfanyl-N(6)-dimethylallyladenosine(37) in tRNA + (sulfur carrier)-H + 5'-deoxyadenosine + L-methionine + A + S-adenosyl-L-homocysteine + 2 H(+). Catalyzes the methylthiolation of N6-(dimethylallyl)adenosine (i(6)A), leading to the formation of 2-methylthio-N6-(dimethylallyl)adenosine (ms(2)i(6)A) at position 37 in tRNAs that read codons beginning with uridine. This is tRNA-2-methylthio-N(6)-dimethylallyladenosine synthase from Rhodopseudomonas palustris (strain BisB18).